The primary structure comprises 311 residues: Methionyl-tRNA formyltransferase (311 aa).

(6S)-5,6,7,8-tetrahydrofolate is bound at residue 110 to 113 (SLLP).

Belongs to the Fmt family.

It carries out the reaction L-methionyl-tRNA(fMet) + (6R)-10-formyltetrahydrofolate = N-formyl-L-methionyl-tRNA(fMet) + (6S)-5,6,7,8-tetrahydrofolate + H(+). Functionally, attaches a formyl group to the free amino group of methionyl-tRNA(fMet). The formyl group appears to play a dual role in the initiator identity of N-formylmethionyl-tRNA by promoting its recognition by IF2 and preventing the misappropriation of this tRNA by the elongation apparatus. The sequence is that of Methionyl-tRNA formyltransferase from Streptococcus equi subsp. equi (strain 4047).